Here is a 608-residue protein sequence, read N- to C-terminus: ATP-citrate synthase beta chain protein 1 (608 aa).

ATP-binding positions include 214–234 (ILRF…ELGG) and 265–291 (FKSE…KNQA). Residue Glu-231 coordinates Mg(2+). The active-site Tele-phosphohistidine intermediate is His-273. 292–302 (LQDAGATVPTS) is a binding site for CoA.

Belongs to the succinate/malate CoA ligase alpha subunit family. In terms of assembly, heterooctamer of 4 alpha and 4 beta chains.

It is found in the cytoplasm. It localises to the cytosol. The catalysed reaction is oxaloacetate + acetyl-CoA + ADP + phosphate = citrate + ATP + CoA. Functionally, ATP citrate-lyase is the primary enzyme responsible for the synthesis of cytosolic acetyl-CoA, used for the elongation of fatty acids and biosynthesis of isoprenoids, flavonoids and malonated derivatives. May supply substrate to the cytosolic acetyl-CoA carboxylase, which generates the malonyl-CoA used for the synthesis of a multitude of compounds, including very long chain fatty acids and flavonoids. Required for normal growth and development and elongation of C18 fatty acids to C20 to C24 fatty acids in seeds. In contrast to all known animal ACL enzymes having a homomeric structure, plant ACLs are composed of alpha and beta chains. This Arabidopsis thaliana (Mouse-ear cress) protein is ATP-citrate synthase beta chain protein 1 (ACLB-1).